The primary structure comprises 106 residues: Transcription initiation factor IIA subunit 2 (106 aa).

This sequence belongs to the TFIIA subunit 2 family. As to quaternary structure, TFIIA is a heterodimer of the large unprocessed subunit 1 and a small subunit gamma. It was originally believed to be a heterotrimer of an alpha (p30), a beta (p20) and a gamma (p14) subunit. Forms a complex with Moonshiner/CG12721 and Trf2. Ubiquitous.

The protein resides in the nucleus. Functionally, TFIIA is a component of the transcription machinery of RNA polymerase II and plays an important role in transcriptional activation. TFIIA in a complex with TBP mediates transcriptional activity. Part of a rhi-dependent transcription machinery that enables the generation of piRNA precursors from heterochromatin while maintaining the suppression of transposon-encoded promoters and enhancers. Forms a complex with Moonshiner/CG12721 and Trf2 which recruit transcriptional machinery to heterochromatin to initiate the bidirectional transcription of piRNA clusters, by interacting with the RDC (rhi, del and cuff) complex that binds to repressive H3K9me3 marks in the chromatin. This mechanism allows transcription to occur in piRNA clusters despite the lack of proper promoter elements and in the presence of the repressive H3K9me3 mark. This chain is Transcription initiation factor IIA subunit 2 (TfIIA-S), found in Drosophila melanogaster (Fruit fly).